Consider the following 196-residue polypeptide: Acyl-homoserine-lactone synthase (196 aa).

The protein belongs to the autoinducer synthase family.

It catalyses the reaction a fatty acyl-[ACP] + S-adenosyl-L-methionine = an N-acyl-L-homoserine lactone + S-methyl-5'-thioadenosine + holo-[ACP] + H(+). Functionally, required for the synthesis of a yet unknown N-aceyl-homoserine lactone (N-aceyl-HSL), an autoinducer molecule which binds to PhzR and thus regulates phenazine production. This Pseudomonas fluorescens protein is Acyl-homoserine-lactone synthase (phzI).